The following is a 430-amino-acid chain: Adenylosuccinate synthetase (430 aa).

Residues 13–19 (GDEGKGK) and 41–43 (GHT) contribute to the GTP site. Asp14 serves as the catalytic Proton acceptor. The Mg(2+) site is built by Asp14 and Gly41. Residues 14–17 (DEGK), 39–42 (NAGH), Thr130, Arg144, Gln225, Thr240, and Arg304 contribute to the IMP site. His42 (proton donor) is an active-site residue. 300-306 (STTGRKR) is a binding site for substrate. GTP contacts are provided by residues Arg306, 332-334 (KLD), and 414-416 (STG).

The protein belongs to the adenylosuccinate synthetase family. In terms of assembly, homodimer. Mg(2+) serves as cofactor.

The protein resides in the cytoplasm. It catalyses the reaction IMP + L-aspartate + GTP = N(6)-(1,2-dicarboxyethyl)-AMP + GDP + phosphate + 2 H(+). Its pathway is purine metabolism; AMP biosynthesis via de novo pathway; AMP from IMP: step 1/2. In terms of biological role, plays an important role in the de novo pathway of purine nucleotide biosynthesis. Catalyzes the first committed step in the biosynthesis of AMP from IMP. This chain is Adenylosuccinate synthetase, found in Buchnera aphidicola subsp. Schizaphis graminum (strain Sg).